The following is a 91-amino-acid chain: Putative regulatory protein CLB_2388 (91 aa).

This sequence belongs to the RemA family.

This Clostridium botulinum (strain ATCC 19397 / Type A) protein is Putative regulatory protein CLB_2388.